The following is a 513-amino-acid chain: MQLNPSEISELIKSRISGLGAEAEVRNTGTVISVTDGICRVHGLSGVMQGEMLEFPGNTFGLALNLERDSVGAVVLGEYEHISEGDTVKCTGRILEVPVGKELLGRVVNTLGQPIDGKGPINAKETDVIEKVAPGVIARQSVSQPVQTGLKSIDAMVPIGRGQRELIIGDRQTGKTAVAVDAIINQKGKGVFCVYVAVGQKASTIANVVRKLEEHGAMEYTVVVAAAASDSAAMQYLAPYAGCTMGEYFRDRGEDALIVYDDLTKQAWAYRQVSLLLRRPPGREAYPGDVFYLHSRLLERAARVNADYVEKFTNGAVKGKTGSLTALPVIETQAGDVSAFVPTNVISITDGQIFLETDLFNAGIRPAINAGISVSRVGGAAQTKVVKNLSGGIRTDLAQYRELAAFAQFASDLDDATRKQLERGRRVTELLKQPQYQPLQVWQLAASLFAANNGFLDNVEVKDILPFEKGLHDHLKTKYADLINRIEETKQLSKEDEAALRAAVEDFKKSAAF.

169 to 176 serves as a coordination point for ATP; it reads GDRQTGKT.

It belongs to the ATPase alpha/beta chains family. In terms of assembly, F-type ATPases have 2 components, CF(1) - the catalytic core - and CF(0) - the membrane proton channel. CF(1) has five subunits: alpha(3), beta(3), gamma(1), delta(1), epsilon(1). CF(0) has three main subunits: a(1), b(2) and c(9-12). The alpha and beta chains form an alternating ring which encloses part of the gamma chain. CF(1) is attached to CF(0) by a central stalk formed by the gamma and epsilon chains, while a peripheral stalk is formed by the delta and b chains.

Its subcellular location is the cell inner membrane. It catalyses the reaction ATP + H2O + 4 H(+)(in) = ADP + phosphate + 5 H(+)(out). Produces ATP from ADP in the presence of a proton gradient across the membrane. The alpha chain is a regulatory subunit. This Cupriavidus necator (strain ATCC 17699 / DSM 428 / KCTC 22496 / NCIMB 10442 / H16 / Stanier 337) (Ralstonia eutropha) protein is ATP synthase subunit alpha.